Consider the following 375-residue polypeptide: o-succinylbenzoate synthase (375 aa).

The active-site Proton donor is the Lys-166. Mg(2+)-binding residues include Asp-191, Glu-216, and Asp-241. Lys-265 acts as the Proton acceptor in catalysis.

It belongs to the mandelate racemase/muconate lactonizing enzyme family. MenC type 2 subfamily. In terms of assembly, homotetramer. A divalent metal cation serves as cofactor.

It catalyses the reaction (1R,6R)-6-hydroxy-2-succinyl-cyclohexa-2,4-diene-1-carboxylate = 2-succinylbenzoate + H2O. The catalysed reaction is N-acetyl-D-methionine = N-acetyl-L-methionine. It carries out the reaction N-acetyl-D-phenylalanine = N-acetyl-L-phenylalanine. The protein operates within quinol/quinone metabolism; 1,4-dihydroxy-2-naphthoate biosynthesis; 1,4-dihydroxy-2-naphthoate from chorismate: step 4/7. Its pathway is quinol/quinone metabolism; menaquinone biosynthesis. Functionally, converts 2-succinyl-6-hydroxy-2,4-cyclohexadiene-1-carboxylate (SHCHC) to 2-succinylbenzoate (OSB). Also acts as a N-succinylamino acid racemase (NSAR) that catalyzes the racemization of various N-succinylamino acids, including N-succinyl-alanine and N-succinyl-phenylalanine. Can catalyze the racemization of a broad range of N-acylamino acids, including N-acetyl-methionine, N-acetyl-phenylalanine, N-carbamoyl-methionine, N-formyl-D-methionine, N-formyl-D-norleucine and N-carbamoyl-D-norleucine. May be a bifunctional enzyme involved in menaquinone biosynthesis and in an irreversible pathway for the conversion of D- to L-amino acids, thereby facilitating the survival and/or growth of the organism. This chain is o-succinylbenzoate synthase, found in Geobacillus kaustophilus.